Here is a 1147-residue protein sequence, read N- to C-terminus: Nucleolar protein 6 (1147 aa).

The tract at residues 1-49 (MQKKRSRAGAAEQEAASDDGEMSDSSDKMEVSQNKGKSGIKRAPEADDV) is disordered. Residues 15–24 (AASDDGEMSD) are compositionally biased toward acidic residues.

The protein belongs to the NRAP family. Part of the small subunit (SSU) processome, composed of more than 70 proteins and the RNA chaperone small nucleolar RNA (snoRNA) U3.

The protein localises to the nucleus. The protein resides in the nucleolus. It is found in the chromosome. Part of the small subunit (SSU) processome, first precursor of the small eukaryotic ribosomal subunit. During the assembly of the SSU processome in the nucleolus, many ribosome biogenesis factors, an RNA chaperone and ribosomal proteins associate with the nascent pre-rRNA and work in concert to generate RNA folding, modifications, rearrangements and cleavage as well as targeted degradation of pre-ribosomal RNA by the RNA exosome. This chain is Nucleolar protein 6 (nol6), found in Xenopus laevis (African clawed frog).